A 546-amino-acid chain; its full sequence is Peroxisomal OPC-8:0-CoA ligase 1 (546 aa).

6 residues coordinate ATP: Ser-197, Ser-198, Gly-199, Thr-200, Thr-201, and Lys-205. A CoA-binding site is contributed by Lys-265. The SBD1 stretch occupies residues 267-338 (EMHEMMSAIG…EKYPTVKILQ (72 aa)). The ATP site is built by Gln-338, Gly-339, Thr-343, Asp-424, and Arg-439. Residues 339–403 (GYGLTESTGI…LKGPSIMKGY (65 aa)) are SBD2. Residues Lys-447 and Gly-448 each coordinate CoA. Lys-530 contributes to the ATP binding site. The Microbody targeting signal signature appears at 544-546 (SKL).

It belongs to the ATP-dependent AMP-binding enzyme family. Mg(2+) serves as cofactor. Expressed at low levels in seedlings, cotyledons, leaves, hypocotyls and roots.

Its subcellular location is the peroxisome. The enzyme catalyses (9S,13S,15Z)-12-oxophyto-10,15-dienoate + ATP + CoA = (10Z,15Z)-12-oxophytodienoyl-CoA + AMP + diphosphate. The catalysed reaction is (1S,2S)-OPC-8 + ATP + CoA = OPC8-CoA + AMP + diphosphate. It catalyses the reaction hexadecanoate + ATP + CoA = hexadecanoyl-CoA + AMP + diphosphate. It carries out the reaction (9Z)-octadecenoate + ATP + CoA = (9Z)-octadecenoyl-CoA + AMP + diphosphate. The enzyme catalyses tetradecanoate + ATP + CoA = tetradecanoyl-CoA + AMP + diphosphate. The catalysed reaction is decanoate + ATP + CoA = decanoyl-CoA + AMP + diphosphate. It catalyses the reaction dodecanoate + ATP + CoA = dodecanoyl-CoA + AMP + diphosphate. It carries out the reaction octadecanoate + ATP + CoA = octadecanoyl-CoA + AMP + diphosphate. The enzyme catalyses OPC-6 + ATP + CoA = OPC-6-CoA + AMP + diphosphate. The catalysed reaction is dinor-OPDA + ATP + CoA = dinor-OPDA-CoA + AMP + diphosphate. In terms of biological role, contributes to jasmonic acid biosynthesis by initiating the beta-oxidative chain shortening of its precursors. Converts 12-oxo-phytodienoic acid (OPDA) and 3-oxo-2-(2'-pentenyl)-cyclopentane-1-octanoic acid (OPC-8:0) into OPDA-CoA and OPC-8:0-CoA, respectively. Follows a two-step reaction mechanism, wherein the carboxylate substrate first undergoes adenylation by ATP, followed by a thioesterification in the presence of CoA to yield the final CoA thioester. This Arabidopsis thaliana (Mouse-ear cress) protein is Peroxisomal OPC-8:0-CoA ligase 1.